Here is a 215-residue protein sequence, read N- to C-terminus: Pyrrolidone-carboxylate peptidase (215 aa).

Active-site residues include Glu80, Cys143, and His167.

Belongs to the peptidase C15 family. Homotetramer.

The protein localises to the cytoplasm. It catalyses the reaction Release of an N-terminal pyroglutamyl group from a polypeptide, the second amino acid generally not being Pro.. In terms of biological role, removes 5-oxoproline from various penultimate amino acid residues except L-proline. In Bacillus thuringiensis subsp. konkukian (strain 97-27), this protein is Pyrrolidone-carboxylate peptidase.